The following is a 1254-amino-acid chain: Zinc finger protein BRUTUS (1254 aa).

Residues 1 to 40 are disordered; it reads MATPLPDFETARGGGAVASSSTTVLPSSVSSSSSSSRPLP. A compositionally biased stretch (low complexity) spans 19-40; that stretch reads SSSTTVLPSSVSSSSSSSRPLP. The helical transmembrane segment at 201 to 221 threads the bilayer; that stretch reads FLCSIPVNMLAVFLPWISSSI. Residues 893–913 form a disordered region; the sequence is GSPDSSSTETSKPSPQKDNDH. Residues 895–906 are compositionally biased toward polar residues; that stretch reads PDSSSTETSKPS. The CHY-type zinc-finger motif lies at 999–1068; the sequence is PEKQIYGCEH…PICTTPSCDG (70 aa). Residues Cys-1006, His-1008, Cys-1019, Cys-1020, Cys-1026, Cys-1029, His-1030, His-1036, Cys-1048, Cys-1051, Cys-1061, Cys-1066, Cys-1076, Cys-1079, His-1090, Cys-1091, Cys-1094, Cys-1097, His-1109, Cys-1110, Cys-1113, Cys-1116, His-1124, and Cys-1126 each coordinate Zn(2+). The segment at 1071 to 1134 adopts a CTCHY-type zinc-finger fold; sequence MAKHYCSICK…KCLEKSLETN (64 aa). Residues 1135 to 1176 form an RING-type; atypical zinc finger; the sequence is CPICCEFLFTSSEAVRALPCGHYMHSACFQAYTCSHYTCPIC.

Interacts with the PYEL proteins bHLH115, bHLH104 and ILR3 in the nucleus. Binds zinc and iron ions. In terms of tissue distribution, expressed in cotyledons of seedlings, young leaves, developing and mature embryos, and other reproductive tissues including floral vasculature, funiculus, septum, and gynoecium valves.

The protein resides in the membrane. It is found in the nucleus. It functions in the pathway protein modification; protein ubiquitination. Its function is as follows. Essential protein. Negatively regulates the response to iron deficiency and thus contributes to iron homeostasis. Exhibits E3 ubiquitin-protein ligase activity in vitro. Plays a role in root growth, rhizosphere acidification, and iron reductase activity in response to iron deprivation. Facilitates 26S proteasome-mediated degradation of PYEL proteins in the absence of iron. This chain is Zinc finger protein BRUTUS, found in Arabidopsis thaliana (Mouse-ear cress).